The sequence spans 148 residues: Antitoxin Xre (148 aa).

It belongs to the MbcA/ParS/Xre antitoxin family. As to quaternary structure, homodimer. Forms a complex with cognate toxin Rse.

In terms of biological role, antitoxin component of a type II toxin-antitoxin (TA) system. Neutralizes the NAD(+) depleting activity of cognate toxin Res. This Photorhabdus laumondii subsp. laumondii (strain DSM 15139 / CIP 105565 / TT01) (Photorhabdus luminescens subsp. laumondii) protein is Antitoxin Xre.